Reading from the N-terminus, the 90-residue chain is [Leu8]-phyllolitorin (90 aa).

Residues 1–30 (MSAVPFTRVLLISGFLAHLLLSTFVTLTVC) form the signal peptide. Positions 31–48 (KEVTEESDDLSKRNVLQR) are excised as a propeptide. Q49 bears the Pyrrolidone carboxylic acid mark. M57 bears the Methionine amide mark. Positions 61-90 (SLENTNRRSDEDMEISALFRGSPLKVKRSD) are excised as a propeptide.

The protein belongs to the bombesin/neuromedin-B/ranatensin family. As to expression, expressed by the skin glands.

It is found in the secreted. In Phyllomedusa sauvagei (Sauvage's leaf frog), this protein is [Leu8]-phyllolitorin.